An 837-amino-acid polypeptide reads, in one-letter code: Protein translocase subunit SecA 1 (837 aa).

Residues glutamine 85, 103-107 (GEGKT), and aspartate 492 contribute to the ATP site. Residues 787 to 806 (QEVAKGEAVHPKEDGEEPKR) are compositionally biased toward basic and acidic residues. Residues 787–811 (QEVAKGEAVHPKEDGEEPKRKPVRK) form a disordered region. 4 residues coordinate Zn(2+): cysteine 821, cysteine 823, cysteine 832, and cysteine 833.

Belongs to the SecA family. As to quaternary structure, monomer and homodimer. Part of the essential Sec protein translocation apparatus which comprises SecA, SecYEG and auxiliary proteins SecDF. Other proteins may also be involved. The cofactor is Zn(2+).

It is found in the cell membrane. It localises to the cytoplasm. It catalyses the reaction ATP + H2O + cellular proteinSide 1 = ADP + phosphate + cellular proteinSide 2.. Its function is as follows. Part of the Sec protein translocase complex. Interacts with the SecYEG preprotein conducting channel. Has a central role in coupling the hydrolysis of ATP to the transfer of proteins into and across the cell membrane, serving as an ATP-driven molecular motor driving the stepwise translocation of polypeptide chains across the membrane. This is Protein translocase subunit SecA 1 from Geobacillus kaustophilus (strain HTA426).